We begin with the raw amino-acid sequence, 572 residues long: Putative carbohydrate transport ATP-binding protein MPN_258 (572 aa).

ABC transporter domains are found at residues 6–253 and 327–572; these read FRME…MGKE and RFIR…LIMQ. 40-47 lines the ATP pocket; it reads GENGAGKS.

It belongs to the ABC transporter superfamily.

Its subcellular location is the cell membrane. Functionally, part of the ABC transporter complex involved in carbohydrates import. Probably responsible for energy coupling to the transport system. The polypeptide is Putative carbohydrate transport ATP-binding protein MPN_258 (Mycoplasma pneumoniae (strain ATCC 29342 / M129 / Subtype 1) (Mycoplasmoides pneumoniae)).